We begin with the raw amino-acid sequence, 76 residues long: Large ribosomal subunit protein bL31 (76 aa).

It belongs to the bacterial ribosomal protein bL31 family. Type A subfamily. As to quaternary structure, part of the 50S ribosomal subunit.

In terms of biological role, binds the 23S rRNA. The polypeptide is Large ribosomal subunit protein bL31 (rpmE) (Pelagibacter ubique (strain HTCC1062)).